A 204-amino-acid polypeptide reads, in one-letter code: Ribosomal RNA small subunit methyltransferase G (204 aa).

S-adenosyl-L-methionine is bound by residues Gly74, Leu79, 125 to 126 (AY), and Arg138.

It belongs to the methyltransferase superfamily. RNA methyltransferase RsmG family.

Its subcellular location is the cytoplasm. Its function is as follows. Specifically methylates the N7 position of a guanine in 16S rRNA. This Brachyspira hyodysenteriae (strain ATCC 49526 / WA1) protein is Ribosomal RNA small subunit methyltransferase G.